The primary structure comprises 83 residues: RNA-binding protein Hfq (83 aa).

In terms of domain architecture, Sm spans 10–69 (DPFLNALRREHVPVSIYLVNGIKLQGQIESFDQYVVLLRNTVTQMVYKHAISTIVPGRAV).

It belongs to the Hfq family. In terms of assembly, homohexamer.

In terms of biological role, RNA chaperone that binds small regulatory RNA (sRNAs) and mRNAs to facilitate mRNA translational regulation in response to envelope stress, environmental stress and changes in metabolite concentrations. Also binds with high specificity to tRNAs. This chain is RNA-binding protein Hfq, found in Acidovorax ebreus (strain TPSY) (Diaphorobacter sp. (strain TPSY)).